The sequence spans 402 residues: Large ribosomal subunit protein uL3 (402 aa).

Residues 1-35 (MSHRKFSAPRHGSMGFTPKKRSKRHRGKVKAFPKD) are disordered. The segment covering 18–31 (PKKRSKRHRGKVKA) has biased composition (basic residues).

This sequence belongs to the universal ribosomal protein uL3 family.

It is found in the cytoplasm. Functionally, the L3 protein is a component of the large subunit of cytoplasmic ribosomes. The chain is Large ribosomal subunit protein uL3 (RPL3) from Toxocara canis (Canine roundworm).